Here is a 203-residue protein sequence, read N- to C-terminus: E3 ubiquitin-protein ligase rnf152-A (203 aa).

The RING-type; degenerate zinc-finger motif lies at 12 to 55 (CQICFNYYSPRRRPKLLDCKRTCCSVCLQQMRACQKDLRCPWCR). A helical membrane pass occupies residues 167–187 (SGICTVILVACVLVFLLGIVL).

Belongs to the RNF152 family.

The protein resides in the lysosome membrane. It catalyses the reaction S-ubiquitinyl-[E2 ubiquitin-conjugating enzyme]-L-cysteine + [acceptor protein]-L-lysine = [E2 ubiquitin-conjugating enzyme]-L-cysteine + N(6)-ubiquitinyl-[acceptor protein]-L-lysine.. The protein operates within protein modification; protein ubiquitination. In terms of biological role, E3 ubiquitin-protein ligase that acts as a negative regulator of mTORC1 signaling by mediating ubiquitination of RagA/RRAGA and RHEB. Catalyzes 'Lys-63'-linked polyubiquitination of RagA/RRAGA in response to amino acid starvation, thereby regulating mTORC1 signaling. Also mediates monoubiquitination of RHEB, promoting its association with the TSC-TBC complex and subsequent inhibition. Also mediates 'Lys-48'-linked polyubiquitination of target proteins and their subsequent targeting to the proteasome for degradation. This Xenopus laevis (African clawed frog) protein is E3 ubiquitin-protein ligase rnf152-A.